The primary structure comprises 209 residues: Probable GTP-binding protein EngB (209 aa).

An EngB-type G domain is found at 12-203; sequence INLEIIFAGR…RDRLHEMKRD (192 aa). GTP is bound by residues 20–27, 45–49, 62–65, 142–145, and 179–181; these read GRSNVGKS, GVTLR, DMPG, NKMD, and ISA. The Mg(2+) site is built by Ser27 and Thr47.

This sequence belongs to the TRAFAC class TrmE-Era-EngA-EngB-Septin-like GTPase superfamily. EngB GTPase family. Requires Mg(2+) as cofactor.

Its function is as follows. Necessary for normal cell division and for the maintenance of normal septation. The sequence is that of Probable GTP-binding protein EngB from Methanosarcina mazei (strain ATCC BAA-159 / DSM 3647 / Goe1 / Go1 / JCM 11833 / OCM 88) (Methanosarcina frisia).